The sequence spans 109 residues: Large ribosomal subunit protein uL23 (109 aa).

This sequence belongs to the universal ribosomal protein uL23 family. In terms of assembly, part of the 50S ribosomal subunit. Contacts protein L29, and trigger factor when it is bound to the ribosome.

One of the early assembly proteins it binds 23S rRNA. One of the proteins that surrounds the polypeptide exit tunnel on the outside of the ribosome. Forms the main docking site for trigger factor binding to the ribosome. The protein is Large ribosomal subunit protein uL23 of Haemophilus influenzae (strain PittEE).